We begin with the raw amino-acid sequence, 181 residues long: ATP synthase subunit delta (181 aa).

It belongs to the ATPase delta chain family. F-type ATPases have 2 components, F(1) - the catalytic core - and F(0) - the membrane proton channel. F(1) has five subunits: alpha(3), beta(3), gamma(1), delta(1), epsilon(1). F(0) has three main subunits: a(1), b(2) and c(10-14). The alpha and beta chains form an alternating ring which encloses part of the gamma chain. F(1) is attached to F(0) by a central stalk formed by the gamma and epsilon chains, while a peripheral stalk is formed by the delta and b chains.

The protein localises to the cell inner membrane. In terms of biological role, f(1)F(0) ATP synthase produces ATP from ADP in the presence of a proton or sodium gradient. F-type ATPases consist of two structural domains, F(1) containing the extramembraneous catalytic core and F(0) containing the membrane proton channel, linked together by a central stalk and a peripheral stalk. During catalysis, ATP synthesis in the catalytic domain of F(1) is coupled via a rotary mechanism of the central stalk subunits to proton translocation. This protein is part of the stalk that links CF(0) to CF(1). It either transmits conformational changes from CF(0) to CF(1) or is implicated in proton conduction. The polypeptide is ATP synthase subunit delta (Chlorobium phaeobacteroides (strain DSM 266 / SMG 266 / 2430)).